A 347-amino-acid chain; its full sequence is Photosystem II protein D1 (347 aa).

The next 3 helical transmembrane spans lie at 31–48 (YIGW…LAII), 120–135 (HFIG…EWEF), and 144–158 (WIYL…AATA). His-120 provides a ligand contact to chlorophyll a. Trp-128 provides a ligand contact to pheophytin a. [CaMn4O5] cluster-binding residues include Asp-172 and Glu-191. A helical membrane pass occupies residues 199-220 (FHILGVAGVFGGSLFSAMHGSL). His-200 contacts chlorophyll a. Residues His-217 and 266 to 267 (SF) contribute to the a quinone site. His-217 lines the Fe cation pocket. His-274 contacts Fe cation. Residues 276-290 (FLAAWPVIGIWFTAL) traverse the membrane as a helical segment. 3 residues coordinate [CaMn4O5] cluster: His-334, Glu-335, and Asp-344.

The protein belongs to the reaction center PufL/M/PsbA/D family. PSII is composed of 1 copy each of membrane proteins PsbA, PsbB, PsbC, PsbD, PsbE, PsbF, PsbH, PsbI, PsbJ, PsbK, PsbL, PsbM, PsbT, PsbX, PsbY, PsbZ, Psb30/Ycf12, at least 3 peripheral proteins of the oxygen-evolving complex and a large number of cofactors. It forms dimeric complexes. It depends on The D1/D2 heterodimer binds P680, chlorophylls that are the primary electron donor of PSII, and subsequent electron acceptors. It shares a non-heme iron and each subunit binds pheophytin, quinone, additional chlorophylls, carotenoids and lipids. D1 provides most of the ligands for the Mn4-Ca-O5 cluster of the oxygen-evolving complex (OEC). There is also a Cl(-1) ion associated with D1 and D2, which is required for oxygen evolution. The PSII complex binds additional chlorophylls, carotenoids and specific lipids. as a cofactor. In terms of processing, tyr-163 forms a radical intermediate that is referred to as redox-active TyrZ, YZ or Y-Z.

Its subcellular location is the plastid. The protein resides in the chloroplast thylakoid membrane. The catalysed reaction is 2 a plastoquinone + 4 hnu + 2 H2O = 2 a plastoquinol + O2. Its function is as follows. Photosystem II (PSII) is a light-driven water:plastoquinone oxidoreductase that uses light energy to abstract electrons from H(2)O, generating O(2) and a proton gradient subsequently used for ATP formation. It consists of a core antenna complex that captures photons, and an electron transfer chain that converts photonic excitation into a charge separation. The D1/D2 (PsbA/PsbD) reaction center heterodimer binds P680, the primary electron donor of PSII as well as several subsequent electron acceptors. The sequence is that of Photosystem II protein D1 from Alexandrium tamarense (Red tide dinoflagellate).